The primary structure comprises 319 residues: Olfactory receptor 8K1 (319 aa).

Topologically, residues 1 to 31 are extracellular; that stretch reads MNHVVKHNHTAVTKVTEFILMGITDNPGLQA. Asn8 carries N-linked (GlcNAc...) asparagine glycosylation. Residues 32–52 traverse the membrane as a helical segment; the sequence is PLFGLFLIIYLVTVIGNLGMV. Over 53–60 the chain is Cytoplasmic; the sequence is ILTYLDSK. The chain crosses the membrane as a helical span at residues 61–81; it reads LHTPMYFFLRHLSITDLGYST. The Extracellular portion of the chain corresponds to 82 to 105; that stretch reads VIAPKMLVNFIVHKNTISYNWYAT. Residues 106–126 traverse the membrane as a helical segment; it reads QLAFFEIFIISELFILSAMAY. Topologically, residues 127–145 are cytoplasmic; the sequence is DRYVAICKPLLYVIIMAEK. The chain crosses the membrane as a helical span at residues 146–166; the sequence is VLWVLVIVPYLYSTFVSLFLT. Residues 167-203 are Extracellular-facing; that stretch reads IKLFKLSFCGSNIISYFYCDCIPLMSILCSDTNELEL. The helical transmembrane segment at 204–223 threads the bilayer; sequence IILIFSGCNLLFSLSIVLIS. Residues 224 to 243 lie on the Cytoplasmic side of the membrane; the sequence is YMFILVAILRMNSRKGRYKA. A helical transmembrane segment spans residues 244-264; the sequence is FSTCSSHLTVVIMFYGTLLFI. Topologically, residues 265–277 are extracellular; that stretch reads YLQPKSSHTLAID. Residues 278–298 traverse the membrane as a helical segment; that stretch reads KMASVFYTLLIPMLNPLIYSL. The Cytoplasmic portion of the chain corresponds to 299 to 319; sequence RNKEVKDALKRTLTNRFKIPI.

This sequence belongs to the G-protein coupled receptor 1 family.

It localises to the cell membrane. Odorant receptor. The chain is Olfactory receptor 8K1 (OR8K1) from Homo sapiens (Human).